The sequence spans 76 residues: Alpha-amylase inhibitor Z-2685 (76 aa).

Disulfide bonds link C9-C25 and C43-C70.

Its function is as follows. Inhibits mammalian alpha-amylases specifically but has no action on plant and microbial alpha-amylases. The chain is Alpha-amylase inhibitor Z-2685 from Streptomyces rochei (Streptomyces parvullus).